Consider the following 200-residue polypeptide: NADH-quinone oxidoreductase subunit C (200 aa).

This sequence belongs to the complex I 30 kDa subunit family. As to quaternary structure, NDH-1 is composed of 14 different subunits. Subunits NuoB, C, D, E, F, and G constitute the peripheral sector of the complex.

The protein resides in the cell inner membrane. The catalysed reaction is a quinone + NADH + 5 H(+)(in) = a quinol + NAD(+) + 4 H(+)(out). Functionally, NDH-1 shuttles electrons from NADH, via FMN and iron-sulfur (Fe-S) centers, to quinones in the respiratory chain. The immediate electron acceptor for the enzyme in this species is believed to be ubiquinone. Couples the redox reaction to proton translocation (for every two electrons transferred, four hydrogen ions are translocated across the cytoplasmic membrane), and thus conserves the redox energy in a proton gradient. The polypeptide is NADH-quinone oxidoreductase subunit C (Ruegeria pomeroyi (strain ATCC 700808 / DSM 15171 / DSS-3) (Silicibacter pomeroyi)).